Here is a 401-residue protein sequence, read N- to C-terminus: Elongation factor Tu (401 aa).

Positions 10 to 209 constitute a tr-type G domain; the sequence is KPHINVGTIG…AVDEYIPTPQ (200 aa). The interval 19–26 is G1; that stretch reads GHVDHGKT. Residue 19–26 coordinates GTP; it reads GHVDHGKT. T26 lines the Mg(2+) pocket. Residues 60–64 form a G2 region; it reads GITIA. The G3 stretch occupies residues 81-84; the sequence is DCPG. GTP is bound by residues 81–85 and 136–139; these read DCPGH and NKVD. Residues 136–139 form a G4 region; it reads NKVD. The interval 174–176 is G5; the sequence is SAR.

Belongs to the TRAFAC class translation factor GTPase superfamily. Classic translation factor GTPase family. EF-Tu/EF-1A subfamily. In terms of assembly, monomer.

The protein localises to the cytoplasm. The catalysed reaction is GTP + H2O = GDP + phosphate + H(+). Its function is as follows. GTP hydrolase that promotes the GTP-dependent binding of aminoacyl-tRNA to the A-site of ribosomes during protein biosynthesis. The protein is Elongation factor Tu of Chloroflexus aurantiacus (strain ATCC 29366 / DSM 635 / J-10-fl).